Here is a 240-residue protein sequence, read N- to C-terminus: CD302 antigen (240 aa).

A C-type lectin domain is found at 40 to 160 (FQDSCYIFLQ…CEVSSVEGTL (121 aa)). A glycan (N-linked (GlcNAc...) asparagine) is linked at asparagine 117. Residues cysteine 136 and cysteine 151 are joined by a disulfide bond. The helical transmembrane segment at 177-197 (ILISALVIASTVILTVLGAVI) threads the bilayer. Residues 198–240 (WFLYKRNLDSGFTTVFSTAPQSPFNDDCVLVVAEENEYAVQFD) lie on the Cytoplasmic side of the membrane.

It is found in the membrane. It localises to the cell projection. The protein localises to the filopodium. Its subcellular location is the cytoplasm. The protein resides in the cell cortex. Potential multifunctional C-type lectin receptor that may play roles in endocytosis and phagocytosis as well as in cell adhesion and migration. The chain is CD302 antigen from Sus scrofa (Pig).